The primary structure comprises 383 residues: Acetylornithine deacetylase (383 aa).

His-80 provides a ligand contact to Zn(2+). The active site involves Asp-82. Asp-112 is a binding site for Zn(2+). The active site involves Glu-144. Zn(2+) is bound by residues Glu-145, Glu-169, and His-355.

This sequence belongs to the peptidase M20A family. ArgE subfamily. Homodimer. Zn(2+) serves as cofactor. Requires Co(2+) as cofactor. The cofactor is glutathione.

The protein resides in the cytoplasm. It catalyses the reaction N(2)-acetyl-L-ornithine + H2O = L-ornithine + acetate. It functions in the pathway amino-acid biosynthesis; L-arginine biosynthesis; L-ornithine from N(2)-acetyl-L-ornithine (linear): step 1/1. In terms of biological role, catalyzes the hydrolysis of the amide bond of N(2)-acetylated L-amino acids. Cleaves the acetyl group from N-acetyl-L-ornithine to form L-ornithine, an intermediate in L-arginine biosynthesis pathway, and a branchpoint in the synthesis of polyamines. The protein is Acetylornithine deacetylase of Shigella boydii serotype 18 (strain CDC 3083-94 / BS512).